The primary structure comprises 660 residues: MSSPSKAIELQLQMKQNAEDLQDFMREMESWEKDIKQKDAKLRNQTGVENQILPPIRNKDFKKKKKNKPKPPLEKSQEDCLNPKKKLLDYEYWDKLDVDKALEDIDKDNSNETSSDSECGDEDAITVDTEKALSEKEKGNNYFKSGKYDEAIECYTRGMDADPYNAILPTNRASAFFRLKKFAVAESDCNLAIALNRDYAKAYARRGAARLALKNLQGAKEDYEKVLELDANNFEAKNELRKINQELYSSASDVQENMATEAKITVENEEEKKQIEIQQRKQQAIMQKDLGNAYFKEGKYEIAIECYSQGMEADNTNALLPANRAMAYLKIQKYKEAEADCTLAISLDASYCKAFARRGTASIMLGKQKEAKEDFEMVLKLDPGNKQAVLELAKISQELRSIEKDRNGNKDSNQRKLINTVEKLPHLRSTKPLRRMVIEEVGGPAEIFNTSLKETNHRKADSVDLTAETNTQDLNQEQNICNSPDVPSPKIPKIEEISDTPGSCEPTTGEDYLTSRPSPPKIEKVVSTFSESLNIGIPAVPTNSFQLESDFRRLKGNPDLLYVYLKQIEPTLYGKLFKKALDPDLFSDILTILREQFINKDSPDLIFEILQRLSELKRFDMAVMFLSESDKNNAHILFSHLEQSMNANVSFNALKKKYGL.

The stretch at isoleucine 8 to lysine 41 is one TPR 1 repeat. Disordered stretches follow at residues isoleucine 35 to cysteine 80 and aspartate 106 to isoleucine 125. The segment covering aspartate 60–proline 69 has biased composition (basic residues). Residues proline 71–cysteine 80 show a composition bias toward basic and acidic residues. TPR repeat units lie at residues alanine 132–asparagine 165, isoleucine 167–tyrosine 199, alanine 200–asparagine 233, alanine 284–asparagine 317, leucine 319–tyrosine 351, cysteine 352–asparagine 385, and glycine 502–alanine 539. Positions glutamate 496–proline 517 are disordered.

Belongs to the RPAP3 family.

Functionally, may for an interface between the RNA polymerase II enzyme and chaperone/scaffolding protein. This is RNA polymerase II-associated protein 3 (rpap3) from Xenopus laevis (African clawed frog).